Here is a 321-residue protein sequence, read N- to C-terminus: Glucokinase (321 aa).

8-13 (GDVGGT) serves as a coordination point for ATP.

This sequence belongs to the bacterial glucokinase family.

The protein resides in the cytoplasm. It carries out the reaction D-glucose + ATP = D-glucose 6-phosphate + ADP + H(+). This chain is Glucokinase, found in Enterobacter sp. (strain 638).